The sequence spans 181 residues: MSRPAHRRPEYHKINKDLFVLTYGALVAQLCKDYEKDEDVNQYLDKMGYGIGTRLVEDFLARSCVGRCHSYSEIIDIIAQVAFKMYLGITPSVTCNNSSKNEFSLILEKNPLVEFVEELPAGRSSLCYCNLLCGIIRGALEMVHLAADVTFLQDRLKGDSVTEIGITFLKKRDEKKYRGKK.

C68 carries S-palmitoyl cysteine lipidation.

Belongs to the TRAPP small subunits family. BET3 subfamily. As to quaternary structure, homodimer. Component of the multisubunit TRAPP (transport protein particle) complex, which includes at least TRAPPC2, TRAPPC2L, TRAPPC3, TRAPPC3L, TRAPPC4, TRAPPC5, TRAPPC8, TRAPPC9, TRAPPC10, TRAPPC11 and TRAPPC12.

The protein resides in the golgi apparatus. It is found in the cis-Golgi network. It localises to the endoplasmic reticulum. Functionally, may play a role in vesicular transport from endoplasmic reticulum to Golgi. This is Trafficking protein particle complex subunit 3-like protein (TRAPPC3L) from Homo sapiens (Human).